The following is a 509-amino-acid chain: ATP synthase subunit alpha (509 aa).

169–176 (GDRQTGKT) serves as a coordination point for ATP.

It belongs to the ATPase alpha/beta chains family. In terms of assembly, F-type ATPases have 2 components, CF(1) - the catalytic core - and CF(0) - the membrane proton channel. CF(1) has five subunits: alpha(3), beta(3), gamma(1), delta(1), epsilon(1). CF(0) has three main subunits: a(1), b(2) and c(9-12). The alpha and beta chains form an alternating ring which encloses part of the gamma chain. CF(1) is attached to CF(0) by a central stalk formed by the gamma and epsilon chains, while a peripheral stalk is formed by the delta and b chains.

It localises to the cell inner membrane. The catalysed reaction is ATP + H2O + 4 H(+)(in) = ADP + phosphate + 5 H(+)(out). Functionally, produces ATP from ADP in the presence of a proton gradient across the membrane. The alpha chain is a regulatory subunit. The chain is ATP synthase subunit alpha from Methylobacterium sp. (strain 4-46).